Reading from the N-terminus, the 306-residue chain is Ornithine carbamoyltransferase (306 aa).

Carbamoyl phosphate contacts are provided by residues 53 to 56 (STRT), Gln-80, Arg-104, and 131 to 134 (HPCQ). L-ornithine is bound by residues Asn-162, Asp-219, and 223-224 (SM). Carbamoyl phosphate is bound by residues 259-260 (CL) and Arg-287.

This sequence belongs to the aspartate/ornithine carbamoyltransferase superfamily. OTCase family.

It is found in the cytoplasm. The enzyme catalyses carbamoyl phosphate + L-ornithine = L-citrulline + phosphate + H(+). It functions in the pathway amino-acid biosynthesis; L-arginine biosynthesis; L-arginine from L-ornithine and carbamoyl phosphate: step 1/3. Its function is as follows. Reversibly catalyzes the transfer of the carbamoyl group from carbamoyl phosphate (CP) to the N(epsilon) atom of ornithine (ORN) to produce L-citrulline. The sequence is that of Ornithine carbamoyltransferase from Psychrobacter sp. (strain PRwf-1).